The primary structure comprises 176 residues: Jacalin-related lectin 19 (176 aa).

The region spanning 12 to 154 is the Jacalin-type lectin domain; sequence TVFVGPWGGN…LDSIGFHLSR (143 aa).

It belongs to the jacalin lectin family.

The sequence is that of Jacalin-related lectin 19 (JAL19) from Arabidopsis thaliana (Mouse-ear cress).